A 187-amino-acid polypeptide reads, in one-letter code: Thermosensitive gluconokinase (187 aa).

10–17 is an ATP binding site; the sequence is GVSGSGKT.

It belongs to the gluconokinase GntK/GntV family.

The enzyme catalyses D-gluconate + ATP = 6-phospho-D-gluconate + ADP + H(+). It functions in the pathway carbohydrate acid metabolism; L-idonate degradation. This chain is Thermosensitive gluconokinase (idnK), found in Escherichia coli (strain K12).